Reading from the N-terminus, the 346-residue chain is Methylthioribose-1-phosphate isomerase (346 aa).

Substrate contacts are provided by residues 47-49 (RGA), arginine 88, and glutamine 195. The Proton donor role is filled by aspartate 236. 246–247 (NK) is a binding site for substrate.

The protein belongs to the eIF-2B alpha/beta/delta subunits family. MtnA subfamily.

The catalysed reaction is 5-(methylsulfanyl)-alpha-D-ribose 1-phosphate = 5-(methylsulfanyl)-D-ribulose 1-phosphate. The protein operates within amino-acid biosynthesis; L-methionine biosynthesis via salvage pathway; L-methionine from S-methyl-5-thio-alpha-D-ribose 1-phosphate: step 1/6. Catalyzes the interconversion of methylthioribose-1-phosphate (MTR-1-P) into methylthioribulose-1-phosphate (MTRu-1-P). The polypeptide is Methylthioribose-1-phosphate isomerase (Maridesulfovibrio salexigens (strain ATCC 14822 / DSM 2638 / NCIMB 8403 / VKM B-1763) (Desulfovibrio salexigens)).